The primary structure comprises 310 residues: MSQNLIRIATRKSPLAMWQAEFVKAELEKIHEGLTVELLPMSTKGDIILDTPLAKVGGKGLFVKELEVAMLEGKADIAVHSMKDVPVEFPEGLGLEVICEREDPRDAFVSNTYKTIEDLPQGAVVGTSSLRRQCQIRAARPDLVIKDLRGNVGTRLAKLDAGNYDAIILAAAGLKRLKLEERIASFISAEQSLPANGQGAVGIECRTDDARVKALLAPLEHAETRMRVTAERAMNTRLEGGCQVPIGAYAEIDGDTLSLRGLVGNPDGSQIITAASSGNKADAEKLGVALAEELLAKGAKTILDAVYANA.

Position 242 is an S-(dipyrrolylmethanemethyl)cysteine (Cys-242).

The protein belongs to the HMBS family. Monomer. It depends on dipyrromethane as a cofactor.

It carries out the reaction 4 porphobilinogen + H2O = hydroxymethylbilane + 4 NH4(+). Its pathway is porphyrin-containing compound metabolism; protoporphyrin-IX biosynthesis; coproporphyrinogen-III from 5-aminolevulinate: step 2/4. Functionally, tetrapolymerization of the monopyrrole PBG into the hydroxymethylbilane pre-uroporphyrinogen in several discrete steps. This chain is Porphobilinogen deaminase, found in Shewanella halifaxensis (strain HAW-EB4).